We begin with the raw amino-acid sequence, 368 residues long: Chorismate synthase (368 aa).

Arg48 and Arg54 together coordinate NADP(+). Residues 131 to 133 (RSS), 243 to 244 (NA), Gly292, 307 to 311 (KPTSS), and Arg333 each bind FMN.

This sequence belongs to the chorismate synthase family. As to quaternary structure, homotetramer. The cofactor is FMNH2.

The enzyme catalyses 5-O-(1-carboxyvinyl)-3-phosphoshikimate = chorismate + phosphate. The protein operates within metabolic intermediate biosynthesis; chorismate biosynthesis; chorismate from D-erythrose 4-phosphate and phosphoenolpyruvate: step 7/7. Catalyzes the anti-1,4-elimination of the C-3 phosphate and the C-6 proR hydrogen from 5-enolpyruvylshikimate-3-phosphate (EPSP) to yield chorismate, which is the branch point compound that serves as the starting substrate for the three terminal pathways of aromatic amino acid biosynthesis. This reaction introduces a second double bond into the aromatic ring system. The polypeptide is Chorismate synthase (Nitrobacter winogradskyi (strain ATCC 25391 / DSM 10237 / CIP 104748 / NCIMB 11846 / Nb-255)).